We begin with the raw amino-acid sequence, 379 residues long: MIATEYPRPPLAGIDWNHLGFEPVEVNGHIESRFSPSTKTWSTPTFIPDPYIRIHGLTPALNYGQQIFEGLKAFRTPSGSITVFRPDQNAHRFARSARAVSIPPIPTDIFLEAVHLAVGMNSEFVPPVGTGAALYIRPLAFASSATVGLALASEFLFCVYVLPVAPLHKHSGENDKDRKKRGVRALVVEDFDRAAPRGTGDVKVGGNYGPALGRIDAARQEGYGLTLHLDSQSRSLVDEFSTSGFIGVRKENDDELKLVVSDSQQIVASVTIDSICEIARGFGWAVEKRSIAFTEVSEFVEVYAAGTAAMLVPVQSVERRSTGEFIQYSVDYAEPTSVFAQLYKALSGVQQGLVPDQWGWTQEVLRPKQLASQDTEADT.

R92 contributes to the pyridoxal 5'-phosphate binding site. K203 is modified (N6-(pyridoxal phosphate)lysine). E239 provides a ligand contact to pyridoxal 5'-phosphate.

This sequence belongs to the class-IV pyridoxal-phosphate-dependent aminotransferase family. Pyridoxal 5'-phosphate is required as a cofactor.

The protein operates within antifungal biosynthesis. Its function is as follows. Transaminase; part of the gene cluster that mediates the de novo generation of L-homotyrosine from acetyl-CoA and 4-hydroxyphenyl-pyruvate. L-homotyrosine is a building block of echinocandin B, a fungal lipidated cyclic hexapeptide that acts as an antifungal agent. L-homotyrosine 4-hydroxyphenyl-pyruvate first undergoes an aldol-type condensation by htyA with the C-2 of acetyl-CoA followed by the release of CoA to form 2-(4-hydroxybenzyl)-malate. This is followed by isomerization of 2-(4-hydroxy-benzyl)-malate to 3-(4-hydroxybenzyl)-malate by htyD. Thereafter, 3-(4-hydroxybenzyl)-malate undergoes decarboxylation and oxidation to form 2-oxo-4-(4-hydroxybenzyl)butanoic acid, coupled to reduction of NAD(+) to NADH by htyC. The product then undergoes transamination catalyzed by htyB to form L-homotyrosine. The sequence is that of Transaminase htyB from Aspergillus rugulosus (Emericella rugulosa).